A 259-amino-acid chain; its full sequence is Global transcriptional regulator CodY (259 aa).

Residues 1–155 are GAF domain; it reads MTLLEKTRKI…GGTVVGMEIL (155 aa). A DNA-binding region (H-T-H motif) is located at residues 203-222; the sequence is ASKIADRVGITRSVIVNALR.

This sequence belongs to the CodY family.

The protein resides in the cytoplasm. Functionally, DNA-binding global transcriptional regulator which is involved in the adaptive response to starvation and acts by directly or indirectly controlling the expression of numerous genes in response to nutrient availability. During rapid exponential growth, CodY is highly active and represses genes whose products allow adaptation to nutrient depletion. The chain is Global transcriptional regulator CodY from Listeria welshimeri serovar 6b (strain ATCC 35897 / DSM 20650 / CCUG 15529 / CIP 8149 / NCTC 11857 / SLCC 5334 / V8).